The primary structure comprises 232 residues: Cytidylate kinase (232 aa).

An ATP-binding site is contributed by 11-19 (GPAGAGKST).

Belongs to the cytidylate kinase family. Type 1 subfamily.

Its subcellular location is the cytoplasm. The enzyme catalyses CMP + ATP = CDP + ADP. It carries out the reaction dCMP + ATP = dCDP + ADP. The chain is Cytidylate kinase from Desulfitobacterium hafniense (strain Y51).